The chain runs to 613 residues: Dihydroxy-acid dehydratase (613 aa).

Residue aspartate 81 coordinates Mg(2+). Cysteine 122 lines the [2Fe-2S] cluster pocket. Aspartate 123 and lysine 124 together coordinate Mg(2+). An N6-carboxylysine modification is found at lysine 124. Residue cysteine 195 coordinates [2Fe-2S] cluster. Glutamate 491 provides a ligand contact to Mg(2+). The Proton acceptor role is filled by serine 517.

It belongs to the IlvD/Edd family. As to quaternary structure, homodimer. The cofactor is [2Fe-2S] cluster. It depends on Mg(2+) as a cofactor.

The catalysed reaction is (2R)-2,3-dihydroxy-3-methylbutanoate = 3-methyl-2-oxobutanoate + H2O. The enzyme catalyses (2R,3R)-2,3-dihydroxy-3-methylpentanoate = (S)-3-methyl-2-oxopentanoate + H2O. Its pathway is amino-acid biosynthesis; L-isoleucine biosynthesis; L-isoleucine from 2-oxobutanoate: step 3/4. It functions in the pathway amino-acid biosynthesis; L-valine biosynthesis; L-valine from pyruvate: step 3/4. Functionally, functions in the biosynthesis of branched-chain amino acids. Catalyzes the dehydration of (2R,3R)-2,3-dihydroxy-3-methylpentanoate (2,3-dihydroxy-3-methylvalerate) into 2-oxo-3-methylpentanoate (2-oxo-3-methylvalerate) and of (2R)-2,3-dihydroxy-3-methylbutanoate (2,3-dihydroxyisovalerate) into 2-oxo-3-methylbutanoate (2-oxoisovalerate), the penultimate precursor to L-isoleucine and L-valine, respectively. This chain is Dihydroxy-acid dehydratase, found in Nitrobacter hamburgensis (strain DSM 10229 / NCIMB 13809 / X14).